Here is a 437-residue protein sequence, read N- to C-terminus: Chromosomal replication initiator protein DnaA (437 aa).

The interval 1-82 (MIFPIWKKCL…KIIINIEKKK (82 aa)) is domain I, interacts with DnaA modulators. The tract at residues 82 to 101 (KLEKKKCIYKKKNIQIYLHS) is domain II. Residues 102-318 (EINKKYQFHN…GILKKIQILS (217 aa)) are domain III, AAA+ region. 4 residues coordinate ATP: glycine 146, glycine 148, lysine 149, and threonine 150. Residues 319 to 437 (ILNKEKITIN…FIYLFNQLNA (119 aa)) are domain IV, binds dsDNA.

This sequence belongs to the DnaA family. Oligomerizes as a right-handed, spiral filament on DNA at oriC.

It localises to the cytoplasm. Plays an essential role in the initiation and regulation of chromosomal replication. ATP-DnaA binds to the origin of replication (oriC) to initiate formation of the DNA replication initiation complex once per cell cycle. Binds the DnaA box (a 9 base pair repeat at the origin) and separates the double-stranded (ds)DNA. Forms a right-handed helical filament on oriC DNA; dsDNA binds to the exterior of the filament while single-stranded (ss)DNA is stabiized in the filament's interior. The ATP-DnaA-oriC complex binds and stabilizes one strand of the AT-rich DNA unwinding element (DUE), permitting loading of DNA polymerase. After initiation quickly degrades to an ADP-DnaA complex that is not apt for DNA replication. Binds acidic phospholipids. The chain is Chromosomal replication initiator protein DnaA from Buchnera aphidicola subsp. Cinara cedri (strain Cc).